We begin with the raw amino-acid sequence, 159 residues long: Cyclic pyranopterin monophosphate synthase (159 aa).

Substrate is bound by residues 75–77 (LCH) and 113–114 (ME). Aspartate 128 is an active-site residue.

The protein belongs to the MoaC family. As to quaternary structure, homohexamer; trimer of dimers.

The enzyme catalyses (8S)-3',8-cyclo-7,8-dihydroguanosine 5'-triphosphate = cyclic pyranopterin phosphate + diphosphate. It functions in the pathway cofactor biosynthesis; molybdopterin biosynthesis. Functionally, catalyzes the conversion of (8S)-3',8-cyclo-7,8-dihydroguanosine 5'-triphosphate to cyclic pyranopterin monophosphate (cPMP). In Vibrio atlanticus (strain LGP32) (Vibrio splendidus (strain Mel32)), this protein is Cyclic pyranopterin monophosphate synthase.